We begin with the raw amino-acid sequence, 389 residues long: S-adenosylmethionine synthase (389 aa).

His-17 is a binding site for ATP. Residue Asp-19 participates in Mg(2+) binding. Glu-45 is a binding site for K(+). L-methionine contacts are provided by Glu-58 and Gln-101. The interval Gln-101 to Glu-111 is flexible loop. Residues Asp-168–Lys-170, Arg-234–Phe-235, Asp-243, Arg-249–Lys-250, Ala-266, and Lys-270 each bind ATP. Asp-243 contacts L-methionine. Residue Lys-274 participates in L-methionine binding.

Belongs to the AdoMet synthase family. Homotetramer; dimer of dimers. Mg(2+) serves as cofactor. It depends on K(+) as a cofactor.

The protein resides in the cytoplasm. It carries out the reaction L-methionine + ATP + H2O = S-adenosyl-L-methionine + phosphate + diphosphate. It functions in the pathway amino-acid biosynthesis; S-adenosyl-L-methionine biosynthesis; S-adenosyl-L-methionine from L-methionine: step 1/1. Its function is as follows. Catalyzes the formation of S-adenosylmethionine (AdoMet) from methionine and ATP. The overall synthetic reaction is composed of two sequential steps, AdoMet formation and the subsequent tripolyphosphate hydrolysis which occurs prior to release of AdoMet from the enzyme. In Geobacter sulfurreducens (strain ATCC 51573 / DSM 12127 / PCA), this protein is S-adenosylmethionine synthase.